The chain runs to 301 residues: Probable splicing factor ECU05_1440 (301 aa).

In terms of domain architecture, RRM 1 spans 1–70 (MQIFIGKIPN…APISVERANG (70 aa)). Disordered stretches follow at residues 106 to 140 (PPMR…SFRM) and 255 to 301 (SKDE…AEND). Basic and acidic residues-rich tracts occupy residues 110–140 (YESR…SFRM) and 255–270 (SKDE…HMRS). An RRM 2 domain is found at 182–255 (LKVVFENIAP…HILKTRSYLS (74 aa)).

This sequence belongs to the splicing factor SR family.

It is found in the nucleus. In terms of biological role, plays a role in splicing. In Encephalitozoon cuniculi (strain GB-M1) (Microsporidian parasite), this protein is Probable splicing factor ECU05_1440.